The following is a 429-amino-acid chain: Adenylosuccinate synthetase (429 aa).

GTP-binding positions include Gly-12–Lys-18 and Gly-40–Thr-42. Asp-13 serves as the catalytic Proton acceptor. Positions 13 and 40 each coordinate Mg(2+). IMP-binding positions include Asp-13–Lys-16, Asn-38–His-41, Thr-129, Arg-143, Gln-223, Thr-238, and Arg-302. Residue His-41 is the Proton donor of the active site. Thr-298–Arg-304 is a substrate binding site. Residues Arg-304, Lys-330 to Asp-332, and Ser-412 to Ser-414 each bind GTP.

It belongs to the adenylosuccinate synthetase family. In terms of assembly, homodimer. It depends on Mg(2+) as a cofactor.

The protein localises to the cytoplasm. It catalyses the reaction IMP + L-aspartate + GTP = N(6)-(1,2-dicarboxyethyl)-AMP + GDP + phosphate + 2 H(+). It participates in purine metabolism; AMP biosynthesis via de novo pathway; AMP from IMP: step 1/2. Its function is as follows. Plays an important role in the de novo pathway of purine nucleotide biosynthesis. Catalyzes the first committed step in the biosynthesis of AMP from IMP. This is Adenylosuccinate synthetase from Erythrobacter litoralis (strain HTCC2594).